Reading from the N-terminus, the 116-residue chain is Large ribosomal subunit protein bL19 (116 aa).

This sequence belongs to the bacterial ribosomal protein bL19 family.

In terms of biological role, this protein is located at the 30S-50S ribosomal subunit interface and may play a role in the structure and function of the aminoacyl-tRNA binding site. In Pasteurella multocida (strain Pm70), this protein is Large ribosomal subunit protein bL19.